A 550-amino-acid chain; its full sequence is Transcription factor p65 (550 aa).

Residue methionine 1 is modified to N-acetylmethionine. One can recognise an RHD domain in the interval 16–190 (ASGPYVEIIE…HPIFDNRAPN (175 aa)). A Glycyl lysine isopeptide (Lys-Gly) (interchain with G-Cter in SUMO3) cross-link involves residue lysine 37. Cysteine 38 bears the Cysteine persulfide; alternate mark. Cysteine 38 bears the S-nitrosocysteine; alternate mark. Residues lysine 122, lysine 123, lysine 218, and lysine 221 each carry the N6-acetyllysine modification. Glycyl lysine isopeptide (Lys-Gly) (interchain with G-Cter in SUMO3); alternate cross-links involve residues lysine 122 and lysine 123. A Phosphothreonine modification is found at threonine 254. Phosphoserine is present on residues serine 276 and serine 281. Positions 301 to 304 (KRKR) match the Nuclear localization signal motif. Lysine 310 carries the post-translational modification N6-acetyllysine; alternate. Residue lysine 310 is modified to N6-methyllysine. At serine 311 the chain carries Phosphoserine. 2 transcriptional activation domain regions span residues 342–388 (PKPA…APVL) and 414–476 (PGPP…EFQQ). A Phosphothreonine modification is found at threonine 434. Serine 468 carries the phosphoserine modification. Threonine 505 is subject to Phosphothreonine. The transcriptional activation domain 2 stretch occupies residues 520 to 550 (TSGLPNGLSGDEDFSSIADMDFSALLSQISS). Phosphoserine is present on serine 535. Residues 535-543 (SIADMDFSA) carry the 9aaTAD motif.

As to quaternary structure, component of the NF-kappa-B p65-p50 complex. Component of the NF-kappa-B p65-c-Rel complex. Homodimer; component of the NF-kappa-B p65-p65 complex. Component of the NF-kappa-B p65-p52 complex. May interact with ETHE1. Binds TLE5 and TLE1. Interacts with TP53BP2. Binds to and is phosphorylated by the activated form of either RPS6KA4 or RPS6KA5. Interacts with ING4 and this interaction may be indirect. Interacts with CARM1, USP48 and UNC5CL. Interacts with IRAK1BP1. Interacts with NFKBID. Interacts with NFKBIA. Interacts with GSK3B. Interacts with NFKBIB. Interacts with NFKBIE. Interacts with NFKBIZ. Interacts with EHMT1 (via ANK repeats). Part of a 70-90 kDa complex at least consisting of CHUK, IKBKB, NFKBIA, RELA, ELP1 and MAP3K14. Interacts with HDAC3; HDAC3 mediates the deacetylation of RELA. Interacts with HDAC1; the interaction requires non-phosphorylated RELA. Interacts with CBP; the interaction requires phosphorylated RELA. Interacts (phosphorylated at 'Thr-254') with PIN1; the interaction inhibits p65 binding to NFKBIA. Interacts with SOCS1. Interacts with UXT. Interacts with MTDH and PHF11. Interacts with ARRB2. Interacts with NFKBIA (when phosphorylated), the interaction is direct; phosphorylated NFKBIA is part of a SCF(BTRC)-like complex lacking CUL1. Interacts with RNF25. Interacts (via C-terminus) with DDX1. Interacts with UFL1 and COMMD1. Interacts with BRMS1; this promotes deacetylation of 'Lys-310'. Interacts with NOTCH2. Directly interacts with MEN1; this interaction represses NFKB-mediated transactivation. Interacts with AKIP1, which promotes the phosphorylation and nuclear retention of RELA. Interacts (via the RHD) with GFI1; the interaction, after bacterial lipopolysaccharide (LPS) stimulation, inhibits the transcriptional activity by interfering with the DNA-binding activity to target gene promoter DNA. Interacts (when acetylated at Lys-310) with BRD4; leading to activation of the NF-kappa-B pathway. Interacts with MEFV. Interacts with CLOCK. Interacts (via N-terminus) with CPEN1; this interaction induces proteolytic cleavage of p65/RELA subunit and inhibition of NF-kappa-B transcriptional activity. Interacts with FOXP3. Interacts with CDK5RAP3; stimulates the interaction of RELA with HDAC1, HDAC2 and HDAC3 thereby inhibiting NF-kappa-B transcriptional activity. Interacts with DHX9; this interaction is direct and activates NF-kappa-B-mediated transcription. Interacts with LRRC25. Interacts with TBX21. Interacts with KAT2A. Interacts with ZBTB7A; involved in the control by RELA of the accessibility of target gene promoters. Directly interacts with DDX3X; this interaction may trap RELA in the cytoplasm, impairing nuclear relocalization upon TNF activating signals. Interacts with PHF2. Interacts with MKRN2; the interaction leads to its polyubiquitination and proteasome-dependent degradation. Interacts with ECSIT. Interacts with RAB28; the interaction contributes to RELA transport from cytoplasm to nucleus. Ubiquitinated by RNF182, leading to its proteasomal degradation. Degradation is required for termination of NF-kappa-B response. Polyubiquitinated via 'Lys-29'-linked ubiquitin; leading to lysosomal degradation. Post-translationally, monomethylated at Lys-310 by SETD6. Monomethylation at Lys-310 is recognized by the ANK repeats of EHMT1 and promotes the formation of repressed chromatin at target genes, leading to down-regulation of NF-kappa-B transcription factor activity. Phosphorylation at Ser-311 disrupts the interaction with EHMT1 without preventing monomethylation at Lys-310 and relieves the repression of target genes. In terms of processing, phosphorylation at Ser-311 disrupts the interaction with EHMT1 and promotes transcription factor activity. Phosphorylation on Ser-535 stimulates acetylation on Lys-310 and interaction with CBP; the phosphorylated and acetylated forms show enhanced transcriptional activity. Phosphorylation at Ser-276 by RPS6KA4 and RPS6KA5 promotes its transactivation and transcriptional activities. Phosphorylation at Ser-75 by herpes simplex virus 1/HHV-1 inhibits NF-kappa-B activation. Post-translationally, reversibly acetylated; the acetylation seems to be mediated by CBP, the deacetylation by HDAC3 and SIRT2. Acetylation at Lys-122 enhances DNA binding and impairs association with NFKBIA. Acetylation at Lys-310 is required for full transcriptional activity in the absence of effects on DNA binding and NFKBIA association. Acetylation at Lys-310 promotes interaction with BRD4. Acetylation can also lower DNA-binding and results in nuclear export. Interaction with BRMS1 promotes deacetylation of Lys-310. Lys-310 is deacetylated by SIRT2. In terms of processing, S-nitrosylation of Cys-38 inactivates the enzyme activity. Sulfhydration at Cys-38 mediates the anti-apoptotic activity by promoting the interaction with RPS3 and activating the transcription factor activity. Post-translationally, sumoylation by PIAS3 negatively regulates DNA-bound activated NF-kappa-B. In terms of processing, proteolytically cleaved within a conserved N-terminus region required for base-specific contact with DNA in a CPEN1-mediated manner, and hence inhibits NF-kappa-B transcriptional activity.

It is found in the nucleus. It localises to the cytoplasm. In terms of biological role, NF-kappa-B is a pleiotropic transcription factor present in almost all cell types and is the endpoint of a series of signal transduction events that are initiated by a vast array of stimuli related to many biological processes such as inflammation, immunity, differentiation, cell growth, tumorigenesis and apoptosis. NF-kappa-B is a homo- or heterodimeric complex formed by the Rel-like domain-containing proteins RELA/p65, RELB, NFKB1/p105, NFKB1/p50, REL and NFKB2/p52. The heterodimeric RELA-NFKB1 complex appears to be most abundant one. The dimers bind at kappa-B sites in the DNA of their target genes and the individual dimers have distinct preferences for different kappa-B sites that they can bind with distinguishable affinity and specificity. Different dimer combinations act as transcriptional activators or repressors, respectively. The NF-kappa-B heterodimeric RELA-NFKB1 and RELA-REL complexes, for instance, function as transcriptional activators. NF-kappa-B is controlled by various mechanisms of post-translational modification and subcellular compartmentalization as well as by interactions with other cofactors or corepressors. NF-kappa-B complexes are held in the cytoplasm in an inactive state complexed with members of the NF-kappa-B inhibitor (I-kappa-B) family. In a conventional activation pathway, I-kappa-B is phosphorylated by I-kappa-B kinases (IKKs) in response to different activators, subsequently degraded thus liberating the active NF-kappa-B complex which translocates to the nucleus. The inhibitory effect of I-kappa-B on NF-kappa-B through retention in the cytoplasm is exerted primarily through the interaction with RELA. RELA shows a weak DNA-binding site which could contribute directly to DNA binding in the NF-kappa-B complex. Besides its activity as a direct transcriptional activator, it is also able to modulate promoters accessibility to transcription factors and thereby indirectly regulate gene expression. Associates with chromatin at the NF-kappa-B promoter region via association with DDX1. Essential for cytokine gene expression in T-cells. The NF-kappa-B homodimeric RELA-RELA complex appears to be involved in invasin-mediated activation of IL-8 expression. Key transcription factor regulating the IFN response during SARS-CoV-2 infection. The polypeptide is Transcription factor p65 (Rattus norvegicus (Rat)).